The primary structure comprises 148 residues: uncharacterized protein (148 aa).

Positions 21, 24, 88, and 117 each coordinate [4Fe-4S] cluster.

This sequence belongs to the complex I 20 kDa subunit family. [4Fe-4S] cluster is required as a cofactor.

This is an uncharacterized protein from Methanocaldococcus jannaschii (strain ATCC 43067 / DSM 2661 / JAL-1 / JCM 10045 / NBRC 100440) (Methanococcus jannaschii).